The chain runs to 228 residues: uncharacterized protein (228 aa).

The signal sequence occupies residues 1-19 (MYRYTWLLWWITILLRIQQ). 5 N-linked (GlcNAc...) asparagine; by host glycosylation sites follow: Asn-41, Asn-93, Asn-100, Asn-128, and Asn-164. Residues 189 to 209 (MWIIPLVIVTTIIVLICFKFP) traverse the membrane as a helical segment.

It belongs to the HHV-5 UL9 family.

It is found in the host membrane. This is an uncharacterized protein from Homo sapiens (Human).